Reading from the N-terminus, the 87-residue chain is Beta-toxin Cn5 (87 aa).

The N-terminal stretch at 1–19 (MNSLLMITACLFLIGTVWA) is a signal peptide. The 66-residue stretch at 20–85 (KEGYLVNKST…TYPLPNKSCS (66 aa)) folds into the LCN-type CS-alpha/beta domain. 4 disulfide bridges follow: cysteine 31-cysteine 84, cysteine 35-cysteine 60, cysteine 44-cysteine 65, and cysteine 48-cysteine 67.

The protein belongs to the long (4 C-C) scorpion toxin superfamily. Sodium channel inhibitor family. Beta subfamily. Expressed by the venom gland.

Its subcellular location is the secreted. Functionally, beta toxins bind voltage-independently at site-4 of sodium channels (Nav) and shift the voltage of activation toward more negative potentials thereby affecting sodium channel activation and promoting spontaneous and repetitive firing. This toxin is lethal to crustaceans (freshwater crayfish (Cambarellus montezumae spp.)), it provokes a reversible paralysis to insects (crickets (Achaeta spp.)), but is not toxic to mice. At high concentrations, it does displace the (beta) mammal-specific toxin Cn2 from rat brain synaptosomes. The polypeptide is Beta-toxin Cn5 (Centruroides noxius (Mexican scorpion)).